The sequence spans 239 residues: Protein Thf1 (239 aa).

Residues 183–219 (ERVKKDLELYRSNLDRLKQARAIVEEMVKAARRQQER) adopt a coiled-coil conformation. The span at 211-221 (KAARRQQERRQ) shows a compositional bias: basic and acidic residues. The tract at residues 211–239 (KAARRQQERRQSTASLPETPAADRRESSG) is disordered.

This sequence belongs to the THF1 family.

In terms of biological role, may be involved in photosynthetic membrane biogenesis. The polypeptide is Protein Thf1 (Synechococcus sp. (strain JA-3-3Ab) (Cyanobacteria bacterium Yellowstone A-Prime)).